Here is a 468-residue protein sequence, read N- to C-terminus: Argininosuccinate synthase (468 aa).

Residues 10–18 (AYSGGLDTS) and alanine 37 each bind ATP. L-citrulline is bound by residues tyrosine 90 and serine 95. Glycine 120 is a binding site for ATP. Threonine 122, asparagine 126, and aspartate 127 together coordinate L-aspartate. Asparagine 126 is a binding site for L-citrulline. L-citrulline is bound by residues arginine 130, serine 182, serine 191, glutamate 267, and tyrosine 279. Over residues 445–457 (PVAAKATAKPVKA) the composition is skewed to low complexity. The tract at residues 445–468 (PVAAKATAKPVKAPVKKPIAKKKG) is disordered. Over residues 458 to 468 (PVKKPIAKKKG) the composition is skewed to basic residues.

The protein belongs to the argininosuccinate synthase family. Type 1 subfamily. In terms of assembly, homotetramer.

Its subcellular location is the cytoplasm. The catalysed reaction is L-citrulline + L-aspartate + ATP = 2-(N(omega)-L-arginino)succinate + AMP + diphosphate + H(+). The protein operates within amino-acid biosynthesis; L-arginine biosynthesis; L-arginine from L-ornithine and carbamoyl phosphate: step 2/3. The protein is Argininosuccinate synthase of Dechloromonas aromatica (strain RCB).